A 1358-amino-acid polypeptide reads, in one-letter code: MSDEFNGLDGLSDELLSAERKLDILTQFKAHVKKTLVNEQVCVKYFENLSRLLVERGSNRRRGNDGDDVVFALAHSALCYLIKRVAMQAQHKFQHDLIELIVSTLFSIPFADKKVWQSSVKALEAIYLAKPNEFCQVLNESIAYNGSIRTNVLLLIDELARMESSNGRNGSMFLQKFIPFWVQEMNTNDSISNTDIELIYDIVANRCPEPMVRSMVDSVIRESAAKVFKSRLVGKLNNHGSESDMKDDFDRSITHTNSINSQVFNLQNELQSIMHQAPQFPTVPAPEPISYSNLSYLIKDLESMLPAFEGSRETEQNWKIRQTNVTKLRSIVLGNVSIEFPDKFLELWKDLNLQYCVTKSALSLRTSLCTHGCSLVKDLCCVFNSMLDISIIENLWSCLAKLMSNTKKIANQNAFICLITLLSTVPFHSRLFNHCFALIRDKNNVSRLYSSTFLRILIVRFHKRLISQHHVYVEEWLQKGLTDAQTTIRESMRITFWYWFKVSPMSGKKMLNLFQPQIKRALENSIPTHLDINYEAAIPPQSKESSRRSSLLPKRFPSYAAPTQSSHLPRSSIKRSLTDLAQGTQSFSKRSLRTPPDHDMNIDLTSELTNSQTNPLLNRYMKREEVEPEPLHVILSKDPKLGLDLLQKYLLSDTKIGDEEKVQSAIVSLIRTNPKAFKPLLHLPKFYQLIPLNFSMVLLPLNDLDISMIETQFKTYDIINNVISILQSLEDKNSEWSIFYVRFKYQIYNFCFNTIAKMLNTVTLSDQLINELINACGKDMDAEKYYKLILNIYLADKTKFVRLLKSTSTASTKLKIANVIQKKDSEFKIKSILNYPSVPEPIVSPEEHHLLEMTMVNPLGKRTVSSNTVIHNSLEGLDESESNPNIIADEDNHSEKEDLVTVPPVAKNSVNTVSFVADSPSDSDNDDTKKNGSDVVDHEEIRDHEESHGFTKFGGFSKLTEMTKVHSVFQPETVDENVDPMEVDSPDESNLDQKSLLTDIFLKNQHQEGSVSPIFKPQELNNDPRHDYDSDMLSDAINGIEIKTNDGSVANRSEDDIKTLGTNMGSVSDPKTFKPINLAHFANDSLFSFELKFIDASIGIVNLTQLKLIVQSIINNGTFKMNELQYILKCFLCYDQEVLEWIHDQHELKDVWAITELLLSSSSSESQIPTNIAYKSIILTACLLTIDDELEHTVLKDSSISQLFEHIISLVAKLDTFENEIYFACTELRTLLLSQDNNKHLPSFLEKCLKALCDTKEQYIVKISFLLETINGIISSMGNLLSVDVLRDLAKTISRYTPSDVAEWRFASCTALATIYSQLISRSTPVGYIRSLMPLLDPSDFEVVRSLSTTKDATRRLG.

Disordered stretches follow at residues 915 to 950 (FVAD…SHGF) and 970 to 990 (QPET…DESN). A compositionally biased stretch (basic and acidic residues) spans 926–949 (DDTKKNGSDVVDHEEIRDHEESHG). Residues 973 to 990 (TVDENVDPMEVDSPDESN) show a composition bias toward acidic residues.

The protein belongs to the CLASP family. As to quaternary structure, interacts with microtubules.

The protein resides in the cytoplasm. It localises to the cytoskeleton. The protein localises to the nucleus. It is found in the spindle. Functionally, microtubule binding protein that promotes the stabilization of dynamic microtubules. Required for mitotic spindle formation. This Kluyveromyces lactis (strain ATCC 8585 / CBS 2359 / DSM 70799 / NBRC 1267 / NRRL Y-1140 / WM37) (Yeast) protein is Protein STU1 (STU1).